The sequence spans 384 residues: Succinate--CoA ligase [ADP-forming] subunit beta (384 aa).

Residues 9-242 (KAILAQYKVP…LNEEDPLEVE (234 aa)) form the ATP-grasp domain. ATP-binding positions include Lys45, 52 to 54 (GRG), Glu98, Leu101, and Glu106. Mg(2+)-binding residues include Asn197 and Asp211. Residues Asn262 and 319-321 (GIL) contribute to the substrate site.

The protein belongs to the succinate/malate CoA ligase beta subunit family. As to quaternary structure, heterotetramer of two alpha and two beta subunits. Requires Mg(2+) as cofactor.

It catalyses the reaction succinate + ATP + CoA = succinyl-CoA + ADP + phosphate. It carries out the reaction GTP + succinate + CoA = succinyl-CoA + GDP + phosphate. It participates in carbohydrate metabolism; tricarboxylic acid cycle; succinate from succinyl-CoA (ligase route): step 1/1. Succinyl-CoA synthetase functions in the citric acid cycle (TCA), coupling the hydrolysis of succinyl-CoA to the synthesis of either ATP or GTP and thus represents the only step of substrate-level phosphorylation in the TCA. The beta subunit provides nucleotide specificity of the enzyme and binds the substrate succinate, while the binding sites for coenzyme A and phosphate are found in the alpha subunit. The chain is Succinate--CoA ligase [ADP-forming] subunit beta from Solibacter usitatus (strain Ellin6076).